A 320-amino-acid polypeptide reads, in one-letter code: Bifunctional protein FolD 2 (320 aa).

NADP(+) contacts are provided by residues 173–175 and I242; that span reads GRS.

Belongs to the tetrahydrofolate dehydrogenase/cyclohydrolase family. In terms of assembly, homodimer.

The enzyme catalyses (6R)-5,10-methylene-5,6,7,8-tetrahydrofolate + NADP(+) = (6R)-5,10-methenyltetrahydrofolate + NADPH. It catalyses the reaction (6R)-5,10-methenyltetrahydrofolate + H2O = (6R)-10-formyltetrahydrofolate + H(+). Its pathway is one-carbon metabolism; tetrahydrofolate interconversion. In terms of biological role, catalyzes the oxidation of 5,10-methylenetetrahydrofolate to 5,10-methenyltetrahydrofolate and then the hydrolysis of 5,10-methenyltetrahydrofolate to 10-formyltetrahydrofolate. This chain is Bifunctional protein FolD 2, found in Rubrobacter xylanophilus (strain DSM 9941 / JCM 11954 / NBRC 16129 / PRD-1).